Here is a 549-residue protein sequence, read N- to C-terminus: Glucose-6-phosphate isomerase (549 aa).

The Proton donor role is filled by Glu355. Catalysis depends on residues His387 and Lys515.

It belongs to the GPI family.

The protein resides in the cytoplasm. It catalyses the reaction alpha-D-glucose 6-phosphate = beta-D-fructose 6-phosphate. It participates in carbohydrate biosynthesis; gluconeogenesis. Its pathway is carbohydrate degradation; glycolysis; D-glyceraldehyde 3-phosphate and glycerone phosphate from D-glucose: step 2/4. In terms of biological role, catalyzes the reversible isomerization of glucose-6-phosphate to fructose-6-phosphate. The sequence is that of Glucose-6-phosphate isomerase from Haemophilus influenzae (strain ATCC 51907 / DSM 11121 / KW20 / Rd).